Reading from the N-terminus, the 329-residue chain is DNA-directed RNA polymerase subunit alpha (329 aa).

An alpha N-terminal domain (alpha-NTD) region spans residues 1-234 (MQSAVNEFLT…QQLAVFVDLE (234 aa)). The alpha C-terminal domain (alpha-CTD) stretch occupies residues 248–329 (IDPVLLRPVD…WPPASLKNND (82 aa)).

Belongs to the RNA polymerase alpha chain family. Homodimer. The RNAP catalytic core consists of 2 alpha, 1 beta, 1 beta' and 1 omega subunit. When a sigma factor is associated with the core the holoenzyme is formed, which can initiate transcription.

It carries out the reaction RNA(n) + a ribonucleoside 5'-triphosphate = RNA(n+1) + diphosphate. Functionally, DNA-dependent RNA polymerase catalyzes the transcription of DNA into RNA using the four ribonucleoside triphosphates as substrates. This Saccharophagus degradans (strain 2-40 / ATCC 43961 / DSM 17024) protein is DNA-directed RNA polymerase subunit alpha.